We begin with the raw amino-acid sequence, 1293 residues long: MEIIRGAPALSTFRVQKLMEACVNAALPVRQIYAEYVHLADLSELLETNEREQLEKILTYGPAIEAHTPQGLLLFVTPRPGTISPWSSKATDIAHNCGLGKVKRLERGVAYYVESDTLTVEQQQTLKGLLHDRMVEVVLDDFAKADVLFKRTEPAPFKSVNVLAEGRRALEVANVEMGLALAEDEIDYLVENFVRLNRNPNDIELMMFAQANSEHCRHKIFNADWTIDGEAQPKSLFKMIKNTFETTPDHVLSAYKDNAAVMEGSVAGRFFPDPNGVYSYHTEPMHVLMKVETHNHPTAISPYPGAATGSGGEIRDEGATGRGSKPKAGLTGFSVSNLKIPGFVQPWEGSYGKPDRIVSALEIMTEGPLGGAAFNNEFGRPALLGYFRTYEQEVSSHNGVEVRGYHKPIMLAGGLGNIREEHVQKGEITVGAKLIVLGGPAMNIGLGGGAASSMASGQSSEDLDFASVQRENPEMERRCQEVIDRCWQLGDKNPIQFIHDVGAGGLSNAFPELVNDGGRGGIFNLRNVPSDEPGMSPLEIWCNESQERYVLSVAAEDLPLFTAICERERAPFAVVGEATQEQHLTLADSHFDNNPIDLPLEVLLGKAPKMSRNVVSAKAVSPALEQSNIDVKEAVKRILSLPTVADKTFLITIGDRTVTGLVNRDQMVGPWQVPVADCAVTAASFDTYAGEAMSMGERTPLALLDFGASARMAVAESIMNIAGADIGSFKRIKLSANWMSAAGHPGEDAGLYEAVKAVGEELCPELSLTIPVGKDSMSMKTAWQQDGANKTVTAPMSLVISAFGVVQDIRNTVTPELRSDKGETSLLLVDLGAGKNRLGGSCLAQVYGELGDIAPDLDDAALLRGFFETMQKLVAKKSVIAYHDRSDGGLFTTLVEMAFAGNTGLAIDLSALQGTDVERLFNEELGGVLQVSRADAELIAAQFAQAGVPCHMIGSLANDQRVTIKDGAREVFSETRVALRTLWSETTYRMQALRDNPACALEEFKLKQDKTDLGLTVNLSFDPSEDVAAPYILKGAAPKMAILREQGVNSHVEMAAAFDRAGFESRDVHMSDILSGRISLEEFQGLVACGGFSYGDVLGAGEGWAKSILFNERARDEFSRFFERDSSFALGVCNGCQMLSNLKEIIPGSEHWPRFVRNRSERFEARFSLVEVQQSPSLFFQGMAGSRMPIAVSHGEGHAEFASAQALALAEASGTIALRFVNGNGEIATQYPQNPNGSPNGLTGICTTDGRVTLMMPHPERVFRTVANSWHPDNWGEDSPWMRMFRNARVNLG.

ATP contacts are provided by residues Gly-305–Asp-316 and Ala-676. The disordered stretch occupies residues Gly-305 to Ala-328. Residues Asp-677, Glu-716, Asn-720, and Asp-884 each coordinate Mg(2+). Position 886 (Ser-886) interacts with ATP. A Glutamine amidotransferase type-1 domain is found at Met-1040 to Gly-1293. Cys-1133 functions as the Nucleophile in the catalytic mechanism. Residues His-1258 and Glu-1260 contribute to the active site.

The protein in the N-terminal section; belongs to the FGAMS family. Monomer.

The protein localises to the cytoplasm. The catalysed reaction is N(2)-formyl-N(1)-(5-phospho-beta-D-ribosyl)glycinamide + L-glutamine + ATP + H2O = 2-formamido-N(1)-(5-O-phospho-beta-D-ribosyl)acetamidine + L-glutamate + ADP + phosphate + H(+). Its pathway is purine metabolism; IMP biosynthesis via de novo pathway; 5-amino-1-(5-phospho-D-ribosyl)imidazole from N(2)-formyl-N(1)-(5-phospho-D-ribosyl)glycinamide: step 1/2. Its function is as follows. Phosphoribosylformylglycinamidine synthase involved in the purines biosynthetic pathway. Catalyzes the ATP-dependent conversion of formylglycinamide ribonucleotide (FGAR) and glutamine to yield formylglycinamidine ribonucleotide (FGAM) and glutamate. The chain is Phosphoribosylformylglycinamidine synthase from Shewanella sp. (strain MR-7).